A 146-amino-acid polypeptide reads, in one-letter code: Heat-stable 19 kDa antigen (146 aa).

The signal sequence occupies residues Met-1–Ala-20.

This sequence belongs to the cerato-platanin family. In terms of processing, glycosylated.

It is found in the secreted. The sequence is that of Heat-stable 19 kDa antigen (CSA) from Coccidioides immitis (strain RS) (Valley fever fungus).